The chain runs to 63 residues: Cecropin-B (63 aa).

The N-terminal stretch at 1–22 (MNFAKILSFVFALVLALSMTSA) is a signal peptide. Positions 23–26 (APEP) are cleaved as a propeptide — removed by a dipeptidylpeptidase. Lysine 47 carries the 5-hydroxylysine; partial modification. Isoleucine 61 carries the isoleucine amide modification.

Belongs to the cecropin family. Lepidopteran-B differs from lepidopteran-A by its hydroxylated residue. In terms of tissue distribution, highest expression in fat body and hemocytes. Is also expressed in Malpighian tubules and to a much lesser extent in midgut. Not present in silk gland.

It is found in the secreted. Its function is as follows. Cecropins have lytic and antibacterial activity against several Gram-positive and Gram-negative bacteria. The chain is Cecropin-B (CECB1) from Bombyx mori (Silk moth).